The chain runs to 427 residues: Glutamyl-tRNA reductase (427 aa).

Residues 49-52, S105, 110-112, and Q116 contribute to the substrate site; these read TCNR and EPQ. The Nucleophile role is filled by C50. Position 185 to 190 (185 to 190) interacts with NADP(+); the sequence is AAGEMN.

The protein belongs to the glutamyl-tRNA reductase family. Homodimer.

It catalyses the reaction (S)-4-amino-5-oxopentanoate + tRNA(Glu) + NADP(+) = L-glutamyl-tRNA(Glu) + NADPH + H(+). It functions in the pathway porphyrin-containing compound metabolism; protoporphyrin-IX biosynthesis; 5-aminolevulinate from L-glutamyl-tRNA(Glu): step 1/2. Its function is as follows. Catalyzes the NADPH-dependent reduction of glutamyl-tRNA(Glu) to glutamate 1-semialdehyde (GSA). The chain is Glutamyl-tRNA reductase from Acinetobacter baumannii (strain AB307-0294).